The sequence spans 126 residues: Fatty acid-binding protein, liver (126 aa).

An N-acetylalanine modification is found at Ala2. Positions 56, 57, 77, 99, and 101 each coordinate cholate.

The protein belongs to the calycin superfamily. Fatty-acid binding protein (FABP) family.

It is found in the cytoplasm. Functionally, binds free fatty acids and their coenzyme A derivatives, bilirubin, and some other small molecules in the cytoplasm. May be involved in intracellular lipid transport. Binds 2 molecules of cholate per subunit. In Gallus gallus (Chicken), this protein is Fatty acid-binding protein, liver (FABP1).